A 97-amino-acid chain; its full sequence is Acylphosphatase (97 aa).

Residues 7 to 97 (RLTAWVHGHV…QERFEGFVER (91 aa)) enclose the Acylphosphatase-like domain. Active-site residues include Arg-22 and Asn-40.

This sequence belongs to the acylphosphatase family.

It carries out the reaction an acyl phosphate + H2O = a carboxylate + phosphate + H(+). This chain is Acylphosphatase (acyP), found in Mycobacterium avium (strain 104).